A 339-amino-acid polypeptide reads, in one-letter code: Phenylalanine--tRNA ligase alpha subunit (339 aa).

Glu-253 is a binding site for Mg(2+).

The protein belongs to the class-II aminoacyl-tRNA synthetase family. Phe-tRNA synthetase alpha subunit type 1 subfamily. Tetramer of two alpha and two beta subunits. Mg(2+) is required as a cofactor.

The protein resides in the cytoplasm. The catalysed reaction is tRNA(Phe) + L-phenylalanine + ATP = L-phenylalanyl-tRNA(Phe) + AMP + diphosphate + H(+). This chain is Phenylalanine--tRNA ligase alpha subunit, found in Geobacter sulfurreducens (strain ATCC 51573 / DSM 12127 / PCA).